Reading from the N-terminus, the 357-residue chain is Phosphoribosylformylglycinamidine cyclo-ligase (357 aa).

It belongs to the AIR synthase family.

It is found in the cytoplasm. It catalyses the reaction 2-formamido-N(1)-(5-O-phospho-beta-D-ribosyl)acetamidine + ATP = 5-amino-1-(5-phospho-beta-D-ribosyl)imidazole + ADP + phosphate + H(+). It participates in purine metabolism; IMP biosynthesis via de novo pathway; 5-amino-1-(5-phospho-D-ribosyl)imidazole from N(2)-formyl-N(1)-(5-phospho-D-ribosyl)glycinamide: step 2/2. The polypeptide is Phosphoribosylformylglycinamidine cyclo-ligase (Rhodopseudomonas palustris (strain ATCC BAA-98 / CGA009)).